The primary structure comprises 822 residues: ATP-dependent zinc metalloprotease FTSH 8, mitochondrial (822 aa).

The segment covering 1 to 25 (MSLASLARALSRRSAPSSSRARQGF) has biased composition (low complexity). 3 disordered regions span residues 1 to 50 (MSLA…LHGG), 103 to 131 (NYYP…STDD), and 202 to 221 (SSPQ…TTND). The transit peptide at 1–93 (MSLASLARAL…LANPQFRRLF (93 aa)) directs the protein to the mitochondrion. Residues 108–127 (GKKEAPKGDGSNKSDSKQDS) show a composition bias toward basic and acidic residues. 375 to 382 (GPPGTGKT) lines the ATP pocket. Residue histidine 600 coordinates Zn(2+). Residue glutamate 601 is part of the active site. 2 residues coordinate Zn(2+): histidine 604 and aspartate 676. Residues 781–822 (PTNYDLFKQGFQDEEDSKNQEAAKTPQPDDDGTPSLGEVVPT) are disordered.

This sequence in the N-terminal section; belongs to the AAA ATPase family. In the C-terminal section; belongs to the peptidase M41 family. It depends on Zn(2+) as a cofactor.

It is found in the mitochondrion. In terms of biological role, probable ATP-dependent zinc metallopeptidase. The chain is ATP-dependent zinc metalloprotease FTSH 8, mitochondrial (FTSH8) from Oryza sativa subsp. japonica (Rice).